The following is a 473-amino-acid chain: Cysteine--tRNA ligase (473 aa).

Residue cysteine 28 coordinates Zn(2+). The 'HIGH' region motif lies at 30–40; sequence MTVYDYCHLGH. The Zn(2+) site is built by cysteine 209, histidine 234, and glutamate 238. The 'KMSKS' region motif lies at 282–286; that stretch reads KMSKS. Residue lysine 285 participates in ATP binding.

Belongs to the class-I aminoacyl-tRNA synthetase family. In terms of assembly, monomer. Zn(2+) serves as cofactor.

It is found in the cytoplasm. The catalysed reaction is tRNA(Cys) + L-cysteine + ATP = L-cysteinyl-tRNA(Cys) + AMP + diphosphate. The sequence is that of Cysteine--tRNA ligase from Neisseria meningitidis serogroup B (strain ATCC BAA-335 / MC58).